A 458-amino-acid polypeptide reads, in one-letter code: Argininosuccinate lyase (458 aa).

This sequence belongs to the lyase 1 family. Argininosuccinate lyase subfamily.

It localises to the cytoplasm. It catalyses the reaction 2-(N(omega)-L-arginino)succinate = fumarate + L-arginine. Its pathway is amino-acid biosynthesis; L-arginine biosynthesis; L-arginine from L-ornithine and carbamoyl phosphate: step 3/3. This Trichlorobacter lovleyi (strain ATCC BAA-1151 / DSM 17278 / SZ) (Geobacter lovleyi) protein is Argininosuccinate lyase.